The chain runs to 252 residues: MLAKRIIPCLDTIGRNVVKGTSFVNIRIVGDAKELARRYEREGADEIVLLDITASEEGRGTFVDVVTEVASELFVPLTVGGGIKNIEDVRKLLKAGADKVSINTAAVENPDIINQIASEFGSQCLVVAIDVKKRGKKSWEVYVKGGKVPTGIDFKDWIVEVEKRGAGEILLTSIDADGHLSGYDYELLECALNYSNLPLIASGGAGSLEDLYKALKIGVDAVLAASIFHFGTYTIPEVKKYLKEKGIWVRLD.

Residues Asp11 and Asp130 contribute to the active site.

It belongs to the HisA/HisF family. Heterodimer of HisH and HisF.

Its subcellular location is the cytoplasm. The catalysed reaction is 5-[(5-phospho-1-deoxy-D-ribulos-1-ylimino)methylamino]-1-(5-phospho-beta-D-ribosyl)imidazole-4-carboxamide + L-glutamine = D-erythro-1-(imidazol-4-yl)glycerol 3-phosphate + 5-amino-1-(5-phospho-beta-D-ribosyl)imidazole-4-carboxamide + L-glutamate + H(+). Its pathway is amino-acid biosynthesis; L-histidine biosynthesis; L-histidine from 5-phospho-alpha-D-ribose 1-diphosphate: step 5/9. In terms of biological role, IGPS catalyzes the conversion of PRFAR and glutamine to IGP, AICAR and glutamate. The HisF subunit catalyzes the cyclization activity that produces IGP and AICAR from PRFAR using the ammonia provided by the HisH subunit. This chain is Imidazole glycerol phosphate synthase subunit HisF, found in Dictyoglomus thermophilum (strain ATCC 35947 / DSM 3960 / H-6-12).